A 168-amino-acid chain; its full sequence is MRTQSLKPYNANYHSLITRDAQERVDAPTDSGLISELVYSENQPAVAQLLLPLLQQLGKQSRWLLWLTPQQKLSRLWLQQSGLPMSKVVQARQINPLSTVDAMEKALLTGNYSVVLGWLPELSENDRIRLRMAAKLGNAYGFVMRPLNETKLDQGQCATLKIHSSLYH.

A ftsZ binding region spans residues 106-112 (ALLTGNY). A lon protease binding region spans residues 161 to 168 (KIHSSLYH).

Belongs to the SulA family. As to quaternary structure, interacts with FtsZ. In terms of processing, is rapidly cleaved and degraded by the Lon protease once DNA damage is repaired.

Its function is as follows. Component of the SOS system and an inhibitor of cell division. Accumulation of SulA causes rapid cessation of cell division and the appearance of long, non-septate filaments. In the presence of GTP, binds a polymerization-competent form of FtsZ in a 1:1 ratio, thus inhibiting FtsZ polymerization and therefore preventing it from participating in the assembly of the Z ring. This mechanism prevents the premature segregation of damaged DNA to daughter cells during cell division. The polypeptide is Cell division inhibitor SulA (Yersinia enterocolitica serotype O:8 / biotype 1B (strain NCTC 13174 / 8081)).